We begin with the raw amino-acid sequence, 188 residues long: Elongation factor P (188 aa).

The protein belongs to the elongation factor P family.

It localises to the cytoplasm. The protein operates within protein biosynthesis; polypeptide chain elongation. Its function is as follows. Involved in peptide bond synthesis. Stimulates efficient translation and peptide-bond synthesis on native or reconstituted 70S ribosomes in vitro. Probably functions indirectly by altering the affinity of the ribosome for aminoacyl-tRNA, thus increasing their reactivity as acceptors for peptidyl transferase. The chain is Elongation factor P from Exiguobacterium sp. (strain ATCC BAA-1283 / AT1b).